We begin with the raw amino-acid sequence, 332 residues long: Delta-aminolevulinic acid dehydratase (332 aa).

Residue Lys-202 is the Schiff-base intermediate with substrate of the active site. 2 residues coordinate 5-aminolevulinate: Arg-212 and Lys-225. Lys-256 functions as the Schiff-base intermediate with substrate in the catalytic mechanism. 5-aminolevulinate-binding residues include Ser-282 and Tyr-321.

It belongs to the ALAD family. As to quaternary structure, homohexamer.

The catalysed reaction is 2 5-aminolevulinate = porphobilinogen + 2 H2O + H(+). It functions in the pathway porphyrin-containing compound metabolism; protoporphyrin-IX biosynthesis; coproporphyrinogen-III from 5-aminolevulinate: step 1/4. Its function is as follows. Catalyzes an early step in the biosynthesis of tetrapyrroles. Binds two molecules of 5-aminolevulinate per subunit, each at a distinct site, and catalyzes their condensation to form porphobilinogen. The protein is Delta-aminolevulinic acid dehydratase (hemB) of Rhodobacter capsulatus (Rhodopseudomonas capsulata).